Consider the following 1252-residue polypeptide: Plasma membrane calcium-transporting ATPase mca-1 (1252 aa).

The Cytoplasmic segment spans residues 1-121 (MQKSQNVTAV…VRLVLDACKD (121 aa)). A helical transmembrane segment spans residues 122-142 (PTLVILVLSGFINLALSFYEP). At 143–180 (TSAAEDATQHLVNATTAAILANGTFMSTTEAPSEGHGT) the chain is on the extracellular side. 2 N-linked (GlcNAc...) asparagine glycosylation sites follow: Asn155 and Asn164. The chain crosses the membrane as a helical span at residues 181 to 201 (AWIEGVAILLCVIVVVLVTAV). Topologically, residues 202–376 (NDYSKERQFR…KSVLQAKLSK (175 aa)) are cytoplasmic. Positions 330 to 361 (DDSTSTSSSSSSSSSSSGSSSNGSSDSSKSGD) are disordered. A compositionally biased stretch (low complexity) spans 333–357 (TSTSSSSSSSSSSSGSSSNGSSDSS). Residues 377–397 (LALQIIYCGTTIAIIALIVLV) traverse the membrane as a helical segment. At 398–422 (TRFCLDHYVFEKNEFSLVDIQMFVK) the chain is on the extracellular side. Residues 423–443 (FFIIAVTILVISIPEGLPLAI) traverse the membrane as a helical segment. Ca(2+) is bound by residues Val432, Ile435, and Glu437. Over 444–879 (ALALTYSVRK…GRNVYDSISK (436 aa)) the chain is Cytoplasmic. The 4-aspartylphosphate intermediate role is filled by Asp479. Positions 479 and 481 each coordinate Mg(2+). Residues Thr481, Glu553, Lys612, Thr733, Gly734, Asp735, Arg792, and Lys798 each contribute to the ATP site. Asp822 is a Mg(2+) binding site. An ATP-binding site is contributed by Asn825. Residues 880–900 (FLQFQLTVNVVAVITAFVGAV) traverse the membrane as a helical segment. Asn888 is a binding site for Ca(2+). The Extracellular segment spans residues 901-908 (TVSDSPLK). A helical membrane pass occupies residues 909–929 (AVHMLWINLIMDTLASLALAT). Ca(2+)-binding residues include Asn916 and Asp920. The Cytoplasmic portion of the chain corresponds to 930–960 (EQPTDELLERKPYGRKKSLISRTMVKNILCH). Residues 961 to 981 (ALYQLIIIFVIFFYGDTIFGI) traverse the membrane as a helical segment. Residues 982–989 (KTGLYAPL) are Extracellular-facing. A helical transmembrane segment spans residues 990-1010 (FAPPSQHFTLVFNAFVMMTVF). Residues 1011–1035 (NEINARKVHGERNVFKGLASNRVFC) lie on the Cytoplasmic side of the membrane. Residues 1036-1056 (VIWVTTFIAQIIIVQFGGAWF) form a helical membrane-spanning segment. At 1057–1065 (STAPLTLQQ) the chain is on the extracellular side. A helical transmembrane segment spans residues 1066 to 1086 (WIVCLVLGFSTLIWGQIVATI). Topologically, residues 1087–1252 (PSKKLPKAWK…NVDMEDIELN (166 aa)) are cytoplasmic. Positions 1124–1142 (LRRSGKSLWVRGMFIIGNH) are calmodulin-binding subdomain A. Residues 1143–1152 (LRVLRAFGME) are calmodulin-binding subdomain B. Residues 1181 to 1252 (YRHQKHQEKK…NVDMEDIELN (72 aa)) form a disordered region.

This sequence belongs to the cation transport ATPase (P-type) (TC 3.A.3) family. Type IIB subfamily. Interacts with calmodulin.

It is found in the cell membrane. The enzyme catalyses Ca(2+)(in) + ATP + H2O = Ca(2+)(out) + ADP + phosphate + H(+). Catalyzes the hydrolysis of ATP coupled with the transport of calcium across a membrane. This Caenorhabditis elegans protein is Plasma membrane calcium-transporting ATPase mca-1.